We begin with the raw amino-acid sequence, 266 residues long: Serine/arginine-rich splicing factor 12 (266 aa).

Residues 42-266 form a disordered region; it reads ARPRRPRAPR…SRSYHHKNSW (225 aa). A compositionally biased stretch (basic residues) spans 43–62; sequence RPRRPRAPRPRLRLRGRPGR. Positions 102–114 are enriched in basic and acidic residues; it reads KSKERHLCSPSDH. Over residues 115–127 the composition is skewed to basic residues; sequence RRSRSPSQRRSRS. Over residues 133 to 144 the composition is skewed to basic and acidic residues; the sequence is GRDRRHSDSLKE. The segment covering 151–166 has biased composition (low complexity); it reads SYSQSKSRSKSLPRQS. Basic residues predominate over residues 183 to 194; that stretch reads GRSRSKSLPKRS. Polar residues-rich tracts occupy residues 202–212 and 235–244; these read SRSPQKQTGSG and AYTSSGSKTQ. The segment covering 245-266 has biased composition (basic residues); it reads TTKHSHLRSHSRSRSYHHKNSW.

The protein belongs to the splicing factor SR family.

It localises to the nucleus. Splicing factor that seems to antagonize SR proteins in pre-mRNA splicing regulation. The chain is Serine/arginine-rich splicing factor 12 (Srsf12) from Mus musculus (Mouse).